Consider the following 510-residue polypeptide: E3 ubiquitin-protein ligase TRIM7 (510 aa).

The RING-type zinc finger occupies 29–81 (CSICLEFFREPVSVECGHSFCRACIMRCWERPGAGTGTATRTLPCPLPCPQCR). Phosphoserine; by RPS6KA5 is present on S106. A B box-type zinc finger spans residues 124 to 165 (AAAARCSQHGEQLKLYCQDDGRAICVVCDRAREHRSHAVLPL). C129, H132, C151, and H157 together coordinate Zn(2+). A coiled-coil region spans residues 165 to 275 (LEEAVQEAKE…SGQIQETAQK (111 aa)). Positions 323 to 510 (LLKKFKEDLQ…STGTYLRIWP (188 aa)) constitute a B30.2/SPRY domain.

The protein belongs to the TRIM/RBCC family. As to quaternary structure, forms homodimers. Interacts with GNIP2. Interacts with GYG1. Interacts with RNF187 (via C-terminus). Phosphorylated at Ser-106 by RPS6KA5/MSK1, which stimulates the ubiquitin ligase activity. In terms of processing, auto-ubiquitinates via 'Lys-63'-linked polyubiquitination. As to expression, highly expressed in antigen-presenting cells.

Its subcellular location is the nucleus. The protein resides in the cytoplasm. It localises to the golgi apparatus. The enzyme catalyses S-ubiquitinyl-[E2 ubiquitin-conjugating enzyme]-L-cysteine + [acceptor protein]-L-lysine = [E2 ubiquitin-conjugating enzyme]-L-cysteine + N(6)-ubiquitinyl-[acceptor protein]-L-lysine.. The protein operates within protein modification; protein ubiquitination. Functionally, E3 ubiquitin-protein ligase that have both tumor-promoting and tumor-suppressing activities and functions in several biological processes including innate immunity, regulation of ferroptosis as well as cell proliferation and migration. Acts as an antiviral effector against multiple viruses by targeting specific viral proteins for ubiquitination and degradation including norovirus NTPase protein. Mechanistically, recognizes the C-terminal glutamine-containing motif generated by viral proteases that process the polyproteins and trigger their ubiquitination and subsequent degradation. Mediates 'Lys-63'-linked polyubiquitination and stabilization of the JUN coactivator RNF187 in response to growth factor signaling via the MEK/ERK pathway, thereby regulating JUN transactivation and cellular proliferation. Promotes the TLR4-mediated signaling activation through its E3 ligase domain leading to production of pro-inflammatory cytokines and type I interferon. Also plays a negative role in the regulation of exogenous cytosolic DNA virus-triggered immune response. Mechanistically, enhances the 'Lys-48'-linked ubiquitination of STING1 leading to its proteasome-dependent degradation. Mediates the ubiquitination of the SIN3-HDAC chromatin remodeling complex component BRMS1. Modulates NCOA4-mediated ferritinophagy and ferroptosis in glioblastoma cells by ubiquitinating NCOA4, leading to its degradation. This chain is E3 ubiquitin-protein ligase TRIM7 (Trim7), found in Mus musculus (Mouse).